The following is a 692-amino-acid chain: Putative receptor-like protein kinase At1g80870 (692 aa).

The chain crosses the membrane as a helical span at residues 20 to 40; sequence LFLILTISSSLVIFFAILYFI. Positions 81–673 constitute a Protein kinase domain; the sequence is FDESNVIGKG…GEMDISSTAF (593 aa). Residues 87–95 and Lys109 each bind ATP; that span reads IGKGGSGTV. The Proton acceptor role is filled by Asp206. Disordered regions lie at residues 427 to 446 and 511 to 533; these read EISE…HRNM and RRKS…GSEM. 2 stretches are compositionally biased toward basic residues: residues 432-444 and 511-524; these read KNKR…KKHR and RRKS…KKKN.

This sequence belongs to the protein kinase superfamily. Ser/Thr protein kinase family.

The protein resides in the cell membrane. It catalyses the reaction L-seryl-[protein] + ATP = O-phospho-L-seryl-[protein] + ADP + H(+). The enzyme catalyses L-threonyl-[protein] + ATP = O-phospho-L-threonyl-[protein] + ADP + H(+). The polypeptide is Putative receptor-like protein kinase At1g80870 (Arabidopsis thaliana (Mouse-ear cress)).